Reading from the N-terminus, the 456-residue chain is Cyclic AMP-responsive element-binding protein 3-like protein 3 (456 aa).

Disordered stretches follow at residues 1–20 and 47–120; these read MDGDLAIGKMASSTSPMGPI and GHGE…KGPC. Over 1–317 the chain is Cytoplasmic; it reads MDGDLAIGKM…STSKSAQTGT (317 aa). The segment covering 71 to 85 has biased composition (polar residues); sequence DSDSPTWSPAASDSG. The region spanning 238-301 is the bZIP domain; that stretch reads MLKKIRRKIR…LSLLEQLKKL (64 aa). A basic motif region spans residues 240–269; it reads KKIRRKIRNKQSAQESRKKKKEYIDGLETR. The leucine-zipper stretch occupies residues 280-301; it reads LQRKVLHLEKQNLSLLEQLKKL. A Glycyl lysine isopeptide (Lys-Gly) (interchain with G-Cter in ubiquitin) cross-link involves residue K289. The helical; Signal-anchor for type II membrane protein transmembrane segment at 318 to 338 threads the bilayer; sequence CIAVLLFSFALIVLPSISPFA. At 339-456 the chain is on the lumenal side; that stretch reads SNRAESPGDF…VGLEAAGGEL (118 aa). 2 disordered regions span residues 365-423 and 435-456; these read RVAP…QGNS and CAPPEPAVSPGHVGLEAAGGEL. 2 N-linked (GlcNAc...) asparagine glycosylation sites follow: N408 and N415.

It belongs to the bZIP family. ATF subfamily. In terms of assembly, binds DNA as a dimer. May form homodimers. Interacts with ATF6. Interacts with SYNV1/HRD1; this interaction leads to CREB3L3 ubiquitination and proteasomal degradation. Controlled by regulated intramembrane proteolysis (RIP). Following ER stress a fragment containing the cytoplasmic transcription factor domain is released by proteolysis. The cleavage seems to be performed sequentially by site-1 and site-2 proteases (PS1 and PS2). In terms of processing, N-glycosylation is required for optimal proteolytic activation. Post-translationally, ubiquitinated at Lys-289 by SYNV1/HRD1 via 'Lys-27'-linked ubiquitin.

It is found in the endoplasmic reticulum membrane. It localises to the nucleus. Transcription factor that may act during endoplasmic reticulum stress by activating unfolded protein response target genes. Activated in response to cAMP stimulation. In vitro, binds the cAMP response element (CRE). Activates transcription through box-B element and CRE. Seems to function synergistically with ATF6. In acute inflammatory response, may activate expression of acute phase response (APR) genes. May be involved in growth suppression. Regulates FGF21 transcription. Plays a crucial role in the regulation of triglyceride metabolism and is required for the maintenance of normal plasma triglyceride concentrations. The sequence is that of Cyclic AMP-responsive element-binding protein 3-like protein 3 (CREB3L3) from Bos taurus (Bovine).